Reading from the N-terminus, the 363-residue chain is Phosphoribosylformylglycinamidine cyclo-ligase (363 aa).

It belongs to the AIR synthase family.

Its subcellular location is the cytoplasm. It catalyses the reaction 2-formamido-N(1)-(5-O-phospho-beta-D-ribosyl)acetamidine + ATP = 5-amino-1-(5-phospho-beta-D-ribosyl)imidazole + ADP + phosphate + H(+). It functions in the pathway purine metabolism; IMP biosynthesis via de novo pathway; 5-amino-1-(5-phospho-D-ribosyl)imidazole from N(2)-formyl-N(1)-(5-phospho-D-ribosyl)glycinamide: step 2/2. The polypeptide is Phosphoribosylformylglycinamidine cyclo-ligase (Brucella anthropi (strain ATCC 49188 / DSM 6882 / CCUG 24695 / JCM 21032 / LMG 3331 / NBRC 15819 / NCTC 12168 / Alc 37) (Ochrobactrum anthropi)).